The primary structure comprises 155 residues: uncharacterized protein (155 aa).

In terms of domain architecture, N-acetyltransferase spans 6–155; it reads TCVRNARLAD…CDEIAMVKTL (150 aa).

It belongs to the acetyltransferase family.

This is an uncharacterized protein from Chlorobaculum tepidum (strain ATCC 49652 / DSM 12025 / NBRC 103806 / TLS) (Chlorobium tepidum).